The chain runs to 470 residues: Fumarate hydratase class II (470 aa).

Substrate is bound by residues 99 to 101 (SGT), 129 to 132 (HPND), 139 to 141 (SSN), and threonine 187. Residue histidine 188 is the Proton donor/acceptor of the active site. Residue serine 318 is part of the active site. Residues serine 319 and 324-326 (KIN) contribute to the substrate site.

The protein belongs to the class-II fumarase/aspartase family. Fumarase subfamily. As to quaternary structure, homotetramer.

The protein resides in the cytoplasm. The enzyme catalyses (S)-malate = fumarate + H2O. Its pathway is carbohydrate metabolism; tricarboxylic acid cycle; (S)-malate from fumarate: step 1/1. Functionally, involved in the TCA cycle. Catalyzes the stereospecific interconversion of fumarate to L-malate. The chain is Fumarate hydratase class II from Halobacterium salinarum (strain ATCC 700922 / JCM 11081 / NRC-1) (Halobacterium halobium).